A 330-amino-acid chain; its full sequence is Ribosomal RNA small subunit methyltransferase H (330 aa).

Residues 51 to 53, Asp-70, Asp-118, and Gln-125 each bind S-adenosyl-L-methionine; that span reads GGH. Residues 276–330 are disordered; the sequence is STDSTPPGLPVPLPDRQPELRLLTRGAELPTEQETAANPRAASARLRAAERTREP. Positions 311–321 are enriched in low complexity; it reads AANPRAASARL.

This sequence belongs to the methyltransferase superfamily. RsmH family.

The protein resides in the cytoplasm. The catalysed reaction is cytidine(1402) in 16S rRNA + S-adenosyl-L-methionine = N(4)-methylcytidine(1402) in 16S rRNA + S-adenosyl-L-homocysteine + H(+). Specifically methylates the N4 position of cytidine in position 1402 (C1402) of 16S rRNA. The polypeptide is Ribosomal RNA small subunit methyltransferase H (Thermobifida fusca (strain YX)).